The primary structure comprises 504 residues: 26S proteasome non-ATPase regulatory subunit 3 (504 aa).

A PCI domain is found at 254-434; that stretch reads ARYFYYQGRI…GYLQSRENID (181 aa). The disordered stretch occupies residues 485 to 504; it reads KEEMERQAEESSDNEGDSDF. A compositionally biased stretch (acidic residues) spans 494–504; the sequence is ESSDNEGDSDF.

This sequence belongs to the proteasome subunit S3 family. In terms of assembly, the 26S proteasome is composed of a core protease, known as the 20S proteasome, capped at one or both ends by the 19S regulatory complex (RC). The RC is composed of at least 18 different subunits in two subcomplexes, the base and the lid, which form the portions proximal and distal to the 20S proteolytic core, respectively.

In terms of biological role, acts as a regulatory subunit of the 26 proteasome which is involved in the ATP-dependent degradation of ubiquitinated proteins. The sequence is that of 26S proteasome non-ATPase regulatory subunit 3 (psmD3) from Dictyostelium discoideum (Social amoeba).